The following is a 561-amino-acid chain: Urocanate hydratase (561 aa).

NAD(+) contacts are provided by residues 52-53, Q130, 176-178, E196, R201, 242-243, 267-271, 277-278, and Y326; these read GG, GMG, NA, QTSAH, and YL. C414 is a catalytic residue. Residue G496 participates in NAD(+) binding.

The protein belongs to the urocanase family. NAD(+) is required as a cofactor.

The protein localises to the cytoplasm. The catalysed reaction is 4-imidazolone-5-propanoate = trans-urocanate + H2O. It participates in amino-acid degradation; L-histidine degradation into L-glutamate; N-formimidoyl-L-glutamate from L-histidine: step 2/3. Functionally, catalyzes the conversion of urocanate to 4-imidazolone-5-propionate. The protein is Urocanate hydratase of Rhizobium rhizogenes (strain K84 / ATCC BAA-868) (Agrobacterium radiobacter).